Here is a 240-residue protein sequence, read N- to C-terminus: Probable septum site-determining protein MinC (240 aa).

Belongs to the MinC family. As to quaternary structure, interacts with MinD and FtsZ.

Its function is as follows. Cell division inhibitor that blocks the formation of polar Z ring septums. Rapidly oscillates between the poles of the cell to destabilize FtsZ filaments that have formed before they mature into polar Z rings. Prevents FtsZ polymerization. The chain is Probable septum site-determining protein MinC from Acinetobacter baumannii (strain ATCC 17978 / DSM 105126 / CIP 53.77 / LMG 1025 / NCDC KC755 / 5377).